The chain runs to 299 residues: Pyridoxal 5'-phosphate synthase subunit PdxS (299 aa).

Aspartate 29 is a binding site for D-ribose 5-phosphate. The active-site Schiff-base intermediate with D-ribose 5-phosphate is lysine 86. Glycine 158 contributes to the D-ribose 5-phosphate binding site. A D-glyceraldehyde 3-phosphate-binding site is contributed by arginine 170. D-ribose 5-phosphate-binding positions include glycine 219 and 240–241 (GS).

It belongs to the PdxS/SNZ family. In terms of assembly, in the presence of PdxT, forms a dodecamer of heterodimers.

The catalysed reaction is aldehydo-D-ribose 5-phosphate + D-glyceraldehyde 3-phosphate + L-glutamine = pyridoxal 5'-phosphate + L-glutamate + phosphate + 3 H2O + H(+). It participates in cofactor biosynthesis; pyridoxal 5'-phosphate biosynthesis. Functionally, catalyzes the formation of pyridoxal 5'-phosphate from ribose 5-phosphate (RBP), glyceraldehyde 3-phosphate (G3P) and ammonia. The ammonia is provided by the PdxT subunit. Can also use ribulose 5-phosphate and dihydroxyacetone phosphate as substrates, resulting from enzyme-catalyzed isomerization of RBP and G3P, respectively. The sequence is that of Pyridoxal 5'-phosphate synthase subunit PdxS from Mycobacterium bovis (strain ATCC BAA-935 / AF2122/97).